The sequence spans 491 residues: Chromosomal replication initiator protein DnaA (491 aa).

The segment at 1–69 (MTTWDKCLKK…TIQECHGNDL (69 aa)) is domain I, interacts with DnaA modulators. Residues 69–154 (LIIEYSNKKF…KEDEEYSFGL (86 aa)) are domain II. The segment at 155–371 (PLKEKYVFDS…GALNRVLTTS (217 aa)) is domain III, AAA+ region. ATP contacts are provided by Gly199, Gly201, Lys202, and Thr203. The tract at residues 372 to 491 (KFNHKDPTIE…YELLLDKISR (120 aa)) is domain IV, binds dsDNA.

Belongs to the DnaA family. As to quaternary structure, oligomerizes as a right-handed, spiral filament on DNA at oriC.

The protein resides in the cytoplasm. In terms of biological role, plays an essential role in the initiation and regulation of chromosomal replication. ATP-DnaA binds to the origin of replication (oriC) to initiate formation of the DNA replication initiation complex once per cell cycle. Binds the DnaA box (a 9 base pair repeat at the origin) and separates the double-stranded (ds)DNA. Forms a right-handed helical filament on oriC DNA; dsDNA binds to the exterior of the filament while single-stranded (ss)DNA is stabiized in the filament's interior. The ATP-DnaA-oriC complex binds and stabilizes one strand of the AT-rich DNA unwinding element (DUE), permitting loading of DNA polymerase. After initiation quickly degrades to an ADP-DnaA complex that is not apt for DNA replication. Binds acidic phospholipids. This Francisella tularensis subsp. novicida (strain U112) protein is Chromosomal replication initiator protein DnaA.